The primary structure comprises 157 residues: 6,7-dimethyl-8-ribityllumazine synthase (157 aa).

5-amino-6-(D-ribitylamino)uracil is bound by residues phenylalanine 26, alanine 60–glutamate 62, and alanine 86–isoleucine 88. Glutamate 91–threonine 92 lines the (2S)-2-hydroxy-3-oxobutyl phosphate pocket. The Proton donor role is filled by histidine 94. Asparagine 119 serves as a coordination point for 5-amino-6-(D-ribitylamino)uracil. Arginine 133 contributes to the (2S)-2-hydroxy-3-oxobutyl phosphate binding site.

The protein belongs to the DMRL synthase family.

The catalysed reaction is (2S)-2-hydroxy-3-oxobutyl phosphate + 5-amino-6-(D-ribitylamino)uracil = 6,7-dimethyl-8-(1-D-ribityl)lumazine + phosphate + 2 H2O + H(+). Its pathway is cofactor biosynthesis; riboflavin biosynthesis; riboflavin from 2-hydroxy-3-oxobutyl phosphate and 5-amino-6-(D-ribitylamino)uracil: step 1/2. Its function is as follows. Catalyzes the formation of 6,7-dimethyl-8-ribityllumazine by condensation of 5-amino-6-(D-ribitylamino)uracil with 3,4-dihydroxy-2-butanone 4-phosphate. This is the penultimate step in the biosynthesis of riboflavin. This chain is 6,7-dimethyl-8-ribityllumazine synthase, found in Laribacter hongkongensis (strain HLHK9).